A 545-amino-acid polypeptide reads, in one-letter code: Esterase-5B (545 aa).

A signal peptide spans Met1–Ala19. An intrachain disulfide couples Cys84 to Cys103. Asn113 is a glycosylation site (N-linked (GlcNAc...) asparagine). Ser207 serves as the catalytic Acyl-ester intermediate. The cysteines at positions 259 and 271 are disulfide-linked. Asn421 carries an N-linked (GlcNAc...) asparagine glycan. Catalysis depends on His467, which acts as the Charge relay system. A glycan (N-linked (GlcNAc...) asparagine) is linked at Asn507. Residues Cys515 and Cys536 are joined by a disulfide bond.

The protein belongs to the type-B carboxylesterase/lipase family. As to quaternary structure, homodimer.

It localises to the secreted. The catalysed reaction is a carboxylic ester + H2O = an alcohol + a carboxylate + H(+). This Drosophila miranda (Fruit fly) protein is Esterase-5B (Est-5B).